Here is a 1481-residue protein sequence, read N- to C-terminus: Cystic fibrosis transmembrane conductance regulator (1481 aa).

The Cytoplasmic segment spans residues 1–77 (MQRSPLEKAS…KLINALRRCF (77 aa)). Residues 78–98 (FWRFMFYGIILYLGEVTKAVQ) traverse the membrane as a helical segment. The ABC transmembrane type-1 1 domain maps to 81 to 365 (FMFYGIILYL…WAVQTWYDSL (285 aa)). At 99 to 122 (PLLLGRIIASYDPDNKVERSIAIY) the chain is on the extracellular side. The chain crosses the membrane as a helical span at residues 123-146 (LGIGLCLLFIVRTLLLHPAIFGLH). Residues 147–195 (HIGMQMRIAMFSLIYKKTLKLSSRVLDKISIGQLVSLLSNNLNKFDEGL) lie on the Cytoplasmic side of the membrane. A helical transmembrane segment spans residues 196 to 216 (ALAHFVWIAPLQVTLLMGLLW). Over 217–222 (DLLQAF) the chain is Extracellular. A helical membrane pass occupies residues 223–243 (TFCGLAFLVVLALLQAGLGKM). Residues 244-298 (MMKYRDQRAGKINERLVITSEMIENIQSVKAYCWEEAMEKIIENLRQTELKLTRK) are Cytoplasmic-facing. A helical transmembrane segment spans residues 299-319 (AAYVRYLNSSAFFFSGFFVVF). Residues 320–339 (LSVLPYALLKGIILRKIFTT) lie on the Extracellular side of the membrane. The helical transmembrane segment at 340–358 (ISFCIVLRMAVTRQFPWAV) threads the bilayer. Residues 359 to 858 (QTWYDSLGAI…YLRYITVHKS (500 aa)) lie on the Cytoplasmic side of the membrane. Residues tryptophan 401, 457–464 (GSTGAGKT), and glutamine 492 each bind ATP. The 225-residue stretch at 421–645 (ISNCDTSLFF…RPDFSSKLMG (225 aa)) folds into the ABC transporter 1 domain. Cysteine 523 carries the S-palmitoyl cysteine lipid modification. A phosphoserine mark is found at serine 548 and serine 659. The interval 653-831 (TAERRNSIIT…EEINEEDLRD (179 aa)) is disordered R region. Residue serine 669 is modified to Phosphoserine; by PKA. Serine 685 carries the post-translational modification Phosphoserine. Lysine 687 is covalently cross-linked (Glycyl lysine isopeptide (Lys-Gly) (interchain with G-Cter in ubiquitin)). Phosphoserine occurs at positions 699 and 711. Threonine 716 is modified (phosphothreonine). Residues serine 736, serine 767, serine 790, serine 795, and serine 813 each carry the phosphoserine modification. A helical membrane pass occupies residues 859–879 (LMFVLIWCLVVFLVEVAASLV). The ABC transmembrane type-1 2 domain occupies 859–1155 (LMFVLIWCLV…AVNSSIDVDS (297 aa)). Residues 880–918 (VLCLFPKILLQDKGNSTKNASNSYAVIITSTSSYYIFYI) lie on the Extracellular side of the membrane. Asparagine 894 and asparagine 898 each carry an N-linked (GlcNAc...) asparagine glycan. A discontinuously helical transmembrane segment spans residues 919-939 (YVGVADTLLALGLFRGLPLVH). The Cytoplasmic portion of the chain corresponds to 940 to 990 (TLITVSKTLHHKMLQSVLQAPMSTLNTLKTGGILNRFSKDIAVLDDLLPLT). A helical membrane pass occupies residues 991 to 1011 (IFDFIQLLLIVIGAVVVVSVL). Topologically, residues 1012-1013 (QP) are extracellular. Residues 1014–1034 (YIFLATVPVIAAFILLRGYFL) form a helical membrane-spanning segment. Residues 1035–1095 (HTSQQLKQLE…TANWFLYLST (61 aa)) are Cytoplasmic-facing. A helical transmembrane segment spans residues 1096–1116 (LRWFQMRIEMIFVIFFIAVTF). Topologically, residues 1117-1130 (ISILTTGEGEGRVG) are extracellular. A helical transmembrane segment spans residues 1131 to 1151 (IILTLAMNIMGTLQWAVNSSI). Residues 1152-1481 (DVDSLMRSVS…TEEEVQETKL (330 aa)) lie on the Cytoplasmic side of the membrane. The 234-residue stretch at 1211–1444 (MTVKDLTAKY…KSLFRQAISP (234 aa)) folds into the ABC transporter 2 domain. ATP is bound by residues tyrosine 1220 and 1245-1252 (GRTGSGKS). Positions 1387–1481 (RTLKQAFADC…TEEEVQETKL (95 aa)) are interaction with GORASP2. Cysteine 1396 carries the S-palmitoyl cysteine lipid modification. A Phosphoserine modification is found at serine 1457. The short motif at 1479–1481 (TKL) is the PDZ-binding element.

The protein belongs to the ABC transporter superfamily. ABCC family. CFTR transporter (TC 3.A.1.202) subfamily. As to quaternary structure, monomer; does not require oligomerization for channel activity. May form oligomers in the membrane. Interacts with SLC26A3, SLC26A6 and NHERF1. Interacts with SHANK2. Interacts with MYO6. Interacts (via C-terminus) with GOPC (via PDZ domain); this promotes CFTR internalization and thereby decreases channel activity. Interacts with SLC4A7 through NHERF1. Found in a complex with MYO5B and RAB11A. Interacts with ANO1. Interacts with SLC26A8. Interacts with AHCYL1; the interaction increases CFTR activity. Interacts with CSE1L. The core-glycosylated form interacts with GORASP2 (via PDZ GRASP-type 1 domain) in respone to ER stress. Interacts with MARCHF2; the interaction leads to CFTR ubiqtuitination and degradation. Interacts with ADGRG2. Post-translationally, N-glycosylated. Phosphorylated; cAMP treatment promotes phosphorylation and activates the channel. Dephosphorylation decreases the ATPase activity (in vitro). Phosphorylation at PKA sites activates the channel. Phosphorylation at PKC sites enhances the response to phosphorylation by PKA. Phosphorylated by AMPK; this inhibits channel activity. In terms of processing, ubiquitinated, leading to its degradation in the lysosome. Deubiquitination by USP10 in early endosomes enhances its endocytic recycling to the cell membrane. Ubiquitinated by RNF185 during ER stress. Ubiquitinated by MARCHF2.

The protein resides in the apical cell membrane. The protein localises to the early endosome membrane. It localises to the cell membrane. It is found in the recycling endosome membrane. Its subcellular location is the endoplasmic reticulum membrane. The protein resides in the nucleus. The catalysed reaction is ATP + H2O + closed Cl(-) channel = ADP + phosphate + open Cl(-) channel.. It carries out the reaction chloride(in) = chloride(out). The enzyme catalyses hydrogencarbonate(in) = hydrogencarbonate(out). It catalyses the reaction ATP + H2O = ADP + phosphate + H(+). Epithelial ion channel that plays an important role in the regulation of epithelial ion and water transport and fluid homeostasis. Mediates the transport of chloride ions across the cell membrane. Possesses an intrinsic ATPase activity and utilizes ATP to gate its channel; the passive flow of anions through the channel is gated by cycles of ATP binding and hydrolysis by the ATP-binding domains. The ion channel is also permeable to HCO(3)(-); selectivity depends on the extracellular chloride concentration. Exerts its function also by modulating the activity of other ion channels and transporters. Contributes to the regulation of the pH and the ion content of the epithelial fluid layer. Modulates the activity of the epithelial sodium channel (ENaC) complex, in part by regulating the cell surface expression of the ENaC complex. May regulate bicarbonate secretion and salvage in epithelial cells by regulating the transporter SLC4A7. Can inhibit the chloride channel activity of ANO1. Plays a role in the chloride and bicarbonate homeostasis during sperm epididymal maturation and capacitation. The protein is Cystic fibrosis transmembrane conductance regulator of Ovis aries (Sheep).